The following is a 2242-amino-acid chain: MSHQAIGISNNFQQVQREQLNHQRLLQAQLQTNGPGSVSQQQQASQQQQQVQHVQQQQQSQQQQQQVASQQNQPQLQMNAQILQALSTPQGQNLVNMLLMQQALNAQQTDTQNPQQIMQHQLAQQQAQQAQQAQQAQQARQQAEQQAQAQARHQAEQQAQQQAQQQAQARQQEQQAQLAAIQQQVTPQQFAQILHMQQQLQQQQFQQQQLQQQQLQQQQLQQQQLQQQQLQQQQLQQVLQISQAQQQAQQAQHVQSRQMQPSQQSQVQAQLQQQQQLQQQQAQQLSQQQAQQQQQLQQLQLQQFLQQQQQLHQQRAAAQQAQAQNNASQQRPSVASTPALSSTPQLNDLTQTMQAQLQQQLLLQQQQAQAQQAQQAQQAQLAQQAQQQQQGQSQNRTVSQALQYIQSMQLQQRADGTPNAESQEERLAQMLNEQQQRMLQNQAREAQHRQLLISSTPAPRGGITMGTPIGIARREEQPVPSTVAVTTAPAAVRTPVAVPPMKQNSNPSMNPSSTSTSASATSSHQILAPSLSKPLEQPSSSKAASSGNESMSDHISRIISENEVILQGDPVIRKKRPYHRQIGAQSSVDHDSNSGGSTRTSPGPKDSRMLQAASRSQSLFELSGSKHFMGSLTSGQPLLRPIQAHNDPNYTPECIYCKLTFPNEAGLQAHEVVCGKKKELEKAQIAQEGNPHSALKRRHTHQDATLAMHSPLAAHTPSNMPGPSEPAIKLKKDDSTELDGTSKPDALQSSSSFPRSLPKEWEQHMLTLQNLAAIIPPFVQAFLAKVLQTKLTMVSSGTLTHIYENYNISPICVKQFLHFASQLTDQQLEEMTVESEKQYLENAEEYQAKGIIQALPCDNLEVTEMLKQQETIMKGQVPDLLVSTQAVLHHCSGKRDNKDPSKNFVMIKLLHANGKDITEIPMKAETDLDECNARFVYQMREFQKINNMNDRLIEVLKTDPAAAATPLFQVAREQSASVKFLIRQTGMVHLTIVASVAKRLGMSSMQQDVPESNQIPNGIIAFDGVQIKQEPEDPPGDDDDDDDDCIIEVVDEDQKQHIAMLTAAASGQDIGIGGQFQKVTQNLEPAIVNQQSIVNHGDSIVNNASIPIANNAPVQIVQNGGPMQHEVVAMPVQLKLEDLRLEPQTSGDTDKPYWLVINGDIGGRPSFMTTAGMTSRTHRTRNITSETYVTVPRQQPMFAVQDGTLSMYAKWNVPVHNDAETKMNLSFMGMVSLRRRTGQQKFFKYTTANKDQGHYRMTHSSFWDISTKIRDRQASMSEEKTPEESVDYDAQFIERLVGGTYTNTDLQGPSNAPVTIPVLVAPEDSTSAEPSTSGQSLLMRSPRPQSPPLRDIKMDLSDDDYSATDLATTCKLEPKQESFEDVKDVKRENSPDARPTVIISDDAGRIRRERFANKYISRIRPKHDQIIGGHRTDEVYVYVRGRGRGRYICDRCGIRCKKPSMLKKHIKSHTDVRAFNCTACNFSFKTKGNLTKHLSSKTHQRRISNIQAGNDSDGTTPSTSSMMNMDDGYHRNQPLFDDYDNNSSDEEDYDHLNRMQAEHKFKFGQEHILFERTAHTPPTRWCLVEAQNDHYWPSPDRRSCMSAPPVAMQRDFDDRAMTPVSGANSPYLSQQVHSPMSTSSQSNIILDIPNNQKSNCSSVSNVSPSNSQNFQSLSTVPTCASSSSNVLVPNVNFLQKDETLKCDQCDRTFRKISDLTLHQHTHNIEMQQSKNRMYQCSECKIPIRTKAQLQKHLERNHGVHMDESVTACIDPLASTQSVLGGPSTSNPRSFMCVDCDIGFRKHGILAKHLRSKTHVMKLESLQRLPVDTLSLITKKDNGACLNDIDTTDCEKARISLLAIVEKLRNEADKDEQGSVVPTTSIPAPQPVALTPEMIRALANAQTPVTASMTNTPSTAQFPVGVVSTPSVSAVSASGSQSNVSCVSSFNNSTMSPNPTVVPQVFPTPNPSSPLESSSMQFRKKAVLDSATHANDMPRTILRISEIPSSLPVNHQLHRDLSFLAHTTSRSESSITSPIVSSSTNFSYRKRSESSLSGSSPTHTKKLMVWNPPLAEPSFYSPKAALHPLSTDKAHASESLSDRLHNKRPRPIPDNTKCQICADEFSTPIELQVHLHVDHVRMMDGAEYKCPRKFCGLNYESLDSLRAHVTAHYETDRQKLLEEKVLLAEADFPIDNSKIEKLNSPKKESMNKFTTPFKAISDHHELYAQTQQGAGSSTSNQSPKAAN.

Residues 120–383 (HQLAQQQAQQ…QQAQQAQLAQ (264 aa)) are a coiled coil. The segment covering 317–330 (AAQQAQAQNNASQQ) has biased composition (low complexity). Disordered regions lie at residues 317-344 (AAQQ…SSTP), 494-553 (TPVA…SMSD), 583-617 (GAQS…SRSQ), 712-754 (LAAH…SSFP), and 1323-1349 (EDST…SPPL). Polar residues predominate over residues 331–344 (RPSVASTPALSSTP). 2 stretches are compositionally biased toward low complexity: residues 494–523 (TPVA…ATSS) and 539–550 (SSSKAASSGNES). A compositionally biased stretch (polar residues) spans 583 to 601 (GAQSSVDHDSNSGGSTRTS). Polar residues predominate over residues 1324–1338 (DSTSAEPSTSGQSLL). C2H2-type zinc fingers lie at residues 1447 to 1469 (YICD…IKSH), 1475 to 1499 (FNCT…SKTH), 1700 to 1722 (LKCD…QHTH), 1734 to 1760 (YQCS…HGVH), and 1790 to 1814 (FMCV…SKTH). The span at 2029–2039 (SITSPIVSSST) shows a compositional bias: low complexity. Disordered regions lie at residues 2029–2059 (SITS…PTHT) and 2085–2107 (STDK…PRPI). Residues 2085–2099 (STDKAHASESLSDRL) show a composition bias toward basic and acidic residues. C2H2-type zinc fingers lie at residues 2111-2134 (TKCQ…HVDH) and 2143-2167 (YKCP…VTAH). The disordered stretch occupies residues 2219-2242 (HELYAQTQQGAGSSTSNQSPKAAN). Positions 2223–2242 (AQTQQGAGSSTSNQSPKAAN) are enriched in polar residues.

In terms of tissue distribution, expressed in the ventral nerve cord (VNC), pharynx, intestine and seam cells (at protein level).

The protein resides in the nucleus. In terms of biological role, transcription factor, probably acting as a transcriptional activator and repressor, involved in the TGF-beta-like dbl-1 signaling pathway. Plays a role in regulation of body size, and patterning of male-specific genital sensilla (simple sense organs), known as rays, and mating-associated structures, spicules. Required for the dorsoventral patterning of the postembryonic mesodermal lineage (M lineage), acting by antagonizing the TGF-beta-like dbl-1 signaling pathway, in part by repressing expression of transcription factor unc-130. Involved in egg-laying, perhaps via modulation of cholinergic neurotransmission. Involved in production of reactive oxygen species (ROS), acting downstream of the dbl-1 signaling pathway. Plays a role in the mitochondrial unfolded protein response (mtUPR). May play a role in modulating lifespan and in responses to proteotoxic stress. Functionally, transcription factor, probably acting as a transcriptional activator. Required for patterning of male-specific genital sensilla (simple sense organs), known as rays. Dispensable for regulation of body size. The polypeptide is Transcription factor sma-9 (Caenorhabditis elegans).